Consider the following 235-residue polypeptide: Peptidase E (235 aa).

Residues Ser122, Asp137, and His159 each act as charge relay system in the active site.

Belongs to the peptidase S51 family.

It is found in the cytoplasm. It catalyses the reaction Dipeptidase E catalyzes the hydrolysis of dipeptides Asp-|-Xaa. It does not act on peptides with N-terminal Glu, Asn or Gln, nor does it cleave isoaspartyl peptides.. Its function is as follows. Hydrolyzes dipeptides containing N-terminal aspartate residues. May play a role in allowing the cell to use peptide aspartate to spare carbon otherwise required for the synthesis of the aspartate family of amino acids. The polypeptide is Peptidase E (Shewanella denitrificans (strain OS217 / ATCC BAA-1090 / DSM 15013)).